The sequence spans 217 residues: 3,4-dihydroxy-2-butanone 4-phosphate synthase (217 aa).

D-ribulose 5-phosphate is bound by residues 37-38, Asp42, 150-154, and Glu174; these read RE and RQGHT. Residue Glu38 participates in Mg(2+) binding. His153 lines the Mg(2+) pocket.

It belongs to the DHBP synthase family. Homodimer. It depends on Mg(2+) as a cofactor. Mn(2+) is required as a cofactor.

The catalysed reaction is D-ribulose 5-phosphate = (2S)-2-hydroxy-3-oxobutyl phosphate + formate + H(+). It participates in cofactor biosynthesis; riboflavin biosynthesis; 2-hydroxy-3-oxobutyl phosphate from D-ribulose 5-phosphate: step 1/1. In terms of biological role, catalyzes the conversion of D-ribulose 5-phosphate to formate and 3,4-dihydroxy-2-butanone 4-phosphate. The sequence is that of 3,4-dihydroxy-2-butanone 4-phosphate synthase from Photorhabdus laumondii subsp. laumondii (strain DSM 15139 / CIP 105565 / TT01) (Photorhabdus luminescens subsp. laumondii).